Consider the following 183-residue polypeptide: MAYVPRLRQEYNERVKSALKEEFSYSNIMEVPKLTKIVISRGVGGAVADKKLIDHAIDELSAISGQKAVSTISKKDVASFKLRKGMPIGAKVTLRGYRMYEFLDRLITSALPRVRDFNGIKSNGFDGRGNYNLGVTEQIIFPEIDIDAVNRIAGMDITFVTTADTDKEAKALLTELGLPFKKN.

This sequence belongs to the universal ribosomal protein uL5 family. As to quaternary structure, part of the 50S ribosomal subunit; part of the 5S rRNA/L5/L18/L25 subcomplex. Contacts the 5S rRNA and the P site tRNA. Forms a bridge to the 30S subunit in the 70S ribosome.

Its function is as follows. This is one of the proteins that bind and probably mediate the attachment of the 5S RNA into the large ribosomal subunit, where it forms part of the central protuberance. In the 70S ribosome it contacts protein S13 of the 30S subunit (bridge B1b), connecting the 2 subunits; this bridge is implicated in subunit movement. Contacts the P site tRNA; the 5S rRNA and some of its associated proteins might help stabilize positioning of ribosome-bound tRNAs. The sequence is that of Large ribosomal subunit protein uL5 from Christiangramia forsetii (strain DSM 17595 / CGMCC 1.15422 / KT0803) (Gramella forsetii).